The sequence spans 337 residues: 3-isopropylmalate dehydrogenase (337 aa).

Residues Arg88, Arg98, Arg122, and Asp212 each contribute to the substrate site. Mg(2+) is bound by residues Asp212, Asp236, and Asp240. Residue 272-284 coordinates NAD(+); it reads GSAPDIAGKGIAD.

The protein belongs to the isocitrate and isopropylmalate dehydrogenases family. LeuB type 2 subfamily. Homodimer. Mg(2+) serves as cofactor. It depends on Mn(2+) as a cofactor.

It localises to the cytoplasm. The enzyme catalyses (2R,3S)-3-isopropylmalate + NAD(+) = 4-methyl-2-oxopentanoate + CO2 + NADH. The protein operates within amino-acid biosynthesis; L-leucine biosynthesis; L-leucine from 3-methyl-2-oxobutanoate: step 3/4. In terms of biological role, catalyzes the oxidation of 3-carboxy-2-hydroxy-4-methylpentanoate (3-isopropylmalate) to 3-carboxy-4-methyl-2-oxopentanoate. The product decarboxylates to 4-methyl-2 oxopentanoate. This is 3-isopropylmalate dehydrogenase from Rhodococcus erythropolis (strain PR4 / NBRC 100887).